A 460-amino-acid polypeptide reads, in one-letter code: tRNA(Ile)-lysidine synthase (460 aa).

37 to 42 (SGGADS) contributes to the ATP binding site.

This sequence belongs to the tRNA(Ile)-lysidine synthase family.

The protein localises to the cytoplasm. It carries out the reaction cytidine(34) in tRNA(Ile2) + L-lysine + ATP = lysidine(34) in tRNA(Ile2) + AMP + diphosphate + H(+). Ligates lysine onto the cytidine present at position 34 of the AUA codon-specific tRNA(Ile) that contains the anticodon CAU, in an ATP-dependent manner. Cytidine is converted to lysidine, thus changing the amino acid specificity of the tRNA from methionine to isoleucine. This Treponema denticola (strain ATCC 35405 / DSM 14222 / CIP 103919 / JCM 8153 / KCTC 15104) protein is tRNA(Ile)-lysidine synthase.